The chain runs to 549 residues: Glucose-6-phosphate isomerase (549 aa).

E355 (proton donor) is an active-site residue. Active-site residues include H386 and K514.

This sequence belongs to the GPI family.

The protein resides in the cytoplasm. It catalyses the reaction alpha-D-glucose 6-phosphate = beta-D-fructose 6-phosphate. It functions in the pathway carbohydrate biosynthesis; gluconeogenesis. It participates in carbohydrate degradation; glycolysis; D-glyceraldehyde 3-phosphate and glycerone phosphate from D-glucose: step 2/4. In terms of biological role, catalyzes the reversible isomerization of glucose-6-phosphate to fructose-6-phosphate. The chain is Glucose-6-phosphate isomerase from Buchnera aphidicola subsp. Acyrthosiphon pisum (strain 5A).